We begin with the raw amino-acid sequence, 335 residues long: Glycerol-3-phosphate dehydrogenase [NAD(P)+] (335 aa).

NADPH-binding residues include Phe-11, Arg-31, and Lys-107. Sn-glycerol 3-phosphate-binding residues include Lys-107 and Gly-135. Residue Ala-139 coordinates NADPH. Sn-glycerol 3-phosphate contacts are provided by Lys-190, Asp-245, Ser-255, Arg-256, and Asn-257. Lys-190 (proton acceptor) is an active-site residue. Arg-256 serves as a coordination point for NADPH. Residues Leu-280 and Glu-282 each contribute to the NADPH site.

This sequence belongs to the NAD-dependent glycerol-3-phosphate dehydrogenase family.

Its subcellular location is the cytoplasm. The enzyme catalyses sn-glycerol 3-phosphate + NAD(+) = dihydroxyacetone phosphate + NADH + H(+). The catalysed reaction is sn-glycerol 3-phosphate + NADP(+) = dihydroxyacetone phosphate + NADPH + H(+). It functions in the pathway membrane lipid metabolism; glycerophospholipid metabolism. Catalyzes the reduction of the glycolytic intermediate dihydroxyacetone phosphate (DHAP) to sn-glycerol 3-phosphate (G3P), the key precursor for phospholipid synthesis. The protein is Glycerol-3-phosphate dehydrogenase [NAD(P)+] of Anaplasma marginale (strain St. Maries).